The following is a 604-amino-acid chain: NADP-dependent malic enzyme, mitochondrial (604 aa).

A disordered region spans residues Ala-29 to Gly-50. Tyr-137 (proton donor) is an active-site residue. Arg-190 provides a ligand contact to NAD(+). Lys-208 (proton acceptor) is an active-site residue. Positions 280, 281, and 304 each coordinate a divalent metal cation. Position 304 (Asp-304) interacts with NAD(+). Residue Ser-371 is modified to Phosphoserine. An NAD(+)-binding site is contributed by Asn-443.

This sequence belongs to the malic enzymes family. Requires Mg(2+) as cofactor. Mn(2+) serves as cofactor. In terms of tissue distribution, expressed predominantly in organs with a low-division rate.

It is found in the mitochondrion matrix. It carries out the reaction (S)-malate + NADP(+) = pyruvate + CO2 + NADPH. It catalyses the reaction oxaloacetate + H(+) = pyruvate + CO2. Catalyzes the oxidative decarboxylation of (S)-malate to pyruvate using NADP(+) as a cofactor. Can also reverse the decarboxylation reaction, but only with significantly lower efficiency. The sequence is that of NADP-dependent malic enzyme, mitochondrial from Homo sapiens (Human).